A 507-amino-acid polypeptide reads, in one-letter code: Glutamate--tRNA ligase (507 aa).

A 'HIGH' region motif is present at residues 14–24; sequence PSPTGPLHIGG. The short motif at 262–266 is the 'KMSKS' region element; that stretch reads KLSKR. Lysine 265 is an ATP binding site.

This sequence belongs to the class-I aminoacyl-tRNA synthetase family. Glutamate--tRNA ligase type 1 subfamily. As to quaternary structure, monomer.

The protein localises to the cytoplasm. The enzyme catalyses tRNA(Glu) + L-glutamate + ATP = L-glutamyl-tRNA(Glu) + AMP + diphosphate. Catalyzes the attachment of glutamate to tRNA(Glu) in a two-step reaction: glutamate is first activated by ATP to form Glu-AMP and then transferred to the acceptor end of tRNA(Glu). The chain is Glutamate--tRNA ligase from Porphyromonas gingivalis (strain ATCC 33277 / DSM 20709 / CIP 103683 / JCM 12257 / NCTC 11834 / 2561).